The chain runs to 162 residues: Caveolin-2 (162 aa).

The Cytoplasmic portion of the chain corresponds to 1–86 (MGLETEKADV…FEISKYVIYK (86 aa)). Phosphotyrosine; by SRC is present on Y19. S20 and S23 each carry phosphoserine. Y27 is modified (phosphotyrosine; by SRC). S36 bears the Phosphoserine mark. The helical intramembrane region spans 87–107 (FLTVFLAIPLAFTAGILFATL). Topologically, residues 108 to 162 (SCLHIWIIMPFVKTCLMVLPSVQTIWRSVTDVIIAPLCTSIGRICSSVSLQVSHD) are cytoplasmic.

This sequence belongs to the caveolin family. As to quaternary structure, monomer or homodimer. Interacts with CAV1; the interaction forms a stable heterooligomeric complex that is required for targeting to lipid rafts and for caveolae formation. Tyrosine phosphorylated forms do not form heterooligomers with the Tyr-19-phosphorylated form existing as a monomer or dimer, and the Tyr-27-form as a monomer only. Interacts (tyrosine phosphorylated form) with the SH2 domain-containing proteins, RASA1, NCK1 and SRC. Interacts (tyrosine phosphorylated form) with INSR, the interaction (Tyr-27-phosphorylated form) is increased on insulin stimulation. Interacts (Tyr-19 phosphorylated form) with MAPK1 (phosphorylated form); the interaction, promoted by insulin, leads to nuclear location and MAPK1 activation. Interacts with STAT3; the interaction is increased on insulin-induced tyrosine phosphorylation leading to STAT activation. In terms of processing, phosphorylated on serine and tyrosine residues. CAV1 promotes phosphorylation on Ser-23 which then targets the complex to the plasma membrane, lipid rafts and caveolae. Phosphorylation on Ser-36 appears to modulate mitosis in endothelial cells. Phosphorylation on both Tyr-19 and Tyr-27 is required for insulin-induced 'Ser-727' phosphorylation of STAT3 and its activation. Phosphorylation on Tyr-19 is required for insulin-induced phosphorylation of MAPK1 and DNA binding of STAT3. Tyrosine phosphorylation is induced by both EGF and insulin (By. similarity).

The protein localises to the nucleus. It is found in the cytoplasm. Its subcellular location is the golgi apparatus membrane. The protein resides in the cell membrane. It localises to the membrane. The protein localises to the caveola. In terms of biological role, may act as a scaffolding protein within caveolar membranes. Interacts directly with G-protein alpha subunits and can functionally regulate their activity. Acts as an accessory protein in conjunction with CAV1 in targeting to lipid rafts and driving caveolae formation. The Ser-36 phosphorylated form has a role in modulating mitosis in endothelial cells. Positive regulator of cellular mitogenesis of the MAPK signaling pathway. Required for the insulin-stimulated nuclear translocation and activation of MAPK1 and STAT3, and the subsequent regulation of cell cycle progression. The chain is Caveolin-2 (CAV2) from Atelerix albiventris (Middle-African hedgehog).